Consider the following 382-residue polypeptide: 1-deoxy-D-xylulose 5-phosphate reductoisomerase (382 aa).

Residues threonine 10, glycine 11, serine 12, isoleucine 13, glycine 36, lysine 37, asparagine 38, and asparagine 121 each contribute to the NADPH site. Lysine 122 lines the 1-deoxy-D-xylulose 5-phosphate pocket. Residue glutamate 123 coordinates NADPH. Aspartate 147 serves as a coordination point for Mn(2+). Residues serine 148, glutamate 149, serine 173, and histidine 196 each contribute to the 1-deoxy-D-xylulose 5-phosphate site. Glutamate 149 contributes to the Mn(2+) binding site. NADPH is bound at residue glycine 202. Serine 209, asparagine 214, lysine 215, and glutamate 218 together coordinate 1-deoxy-D-xylulose 5-phosphate. Mn(2+) is bound at residue glutamate 218.

The protein belongs to the DXR family. Requires Mg(2+) as cofactor. Mn(2+) serves as cofactor.

It carries out the reaction 2-C-methyl-D-erythritol 4-phosphate + NADP(+) = 1-deoxy-D-xylulose 5-phosphate + NADPH + H(+). Its pathway is isoprenoid biosynthesis; isopentenyl diphosphate biosynthesis via DXP pathway; isopentenyl diphosphate from 1-deoxy-D-xylulose 5-phosphate: step 1/6. Functionally, catalyzes the NADPH-dependent rearrangement and reduction of 1-deoxy-D-xylulose-5-phosphate (DXP) to 2-C-methyl-D-erythritol 4-phosphate (MEP). This Halalkalibacterium halodurans (strain ATCC BAA-125 / DSM 18197 / FERM 7344 / JCM 9153 / C-125) (Bacillus halodurans) protein is 1-deoxy-D-xylulose 5-phosphate reductoisomerase.